A 116-amino-acid chain; its full sequence is uncharacterized protein (116 aa).

Residues 1 to 46 (MGDNTTVAPGTNQTLVEEDLGAQITHTLMVQIMSKLNEMLTEYQPQ) are Extracellular-facing. N-linked (GlcNAc...) asparagine; by host glycosylation is found at asparagine 4 and asparagine 12. The helical transmembrane segment at 47–67 (IIGIGATVLAIFVIMFISLLI) threads the bilayer. Residues 68–116 (ILGCNCIRPYNFKNLKRYITGKASKSVEYQPLKMSAVNMGMDEDDEFLA) lie on the Cytoplasmic side of the membrane.

It localises to the host membrane. This is an uncharacterized protein from Magallana gigas (Pacific oyster).